We begin with the raw amino-acid sequence, 396 residues long: Acetate kinase (396 aa).

Asn-7 provides a ligand contact to Mg(2+). Residue Lys-14 coordinates ATP. Arg-88 serves as a coordination point for substrate. Asp-145 serves as the catalytic Proton donor/acceptor. ATP is bound by residues 203–207 (HAGNG), 278–280 (DAR), and 326–330 (GIGEN). Residue Glu-379 participates in Mg(2+) binding.

The protein belongs to the acetokinase family. In terms of assembly, homodimer. Mg(2+) serves as cofactor. Mn(2+) is required as a cofactor.

Its subcellular location is the cytoplasm. It carries out the reaction acetate + ATP = acetyl phosphate + ADP. The protein operates within metabolic intermediate biosynthesis; acetyl-CoA biosynthesis; acetyl-CoA from acetate: step 1/2. Functionally, catalyzes the formation of acetyl phosphate from acetate and ATP. Can also catalyze the reverse reaction. The protein is Acetate kinase of Phytoplasma australiense.